Here is a 749-residue protein sequence, read N- to C-terminus: Protein SEY1 homolog 2 (749 aa).

Over 1-671 (MIKNYGDRYH…QKHKQDFLQN (671 aa)) the chain is Cytoplasmic. In terms of domain architecture, GB1/RHD3-type G spans 40–265 (GKNYNIVSII…YEKNVRWSDM (226 aa)). 50-57 (GSQSTGKS) serves as a coordination point for GTP. Residues 445–465 (NQLKAFVEAQLATFKQQLDNI) adopt a coiled-coil conformation. The helical transmembrane segment at 672-692 (IPKPFWFLLLFFMYDDVLRWM) threads the bilayer. The Lumenal segment spans residues 693–695 (GNP). A helical membrane pass occupies residues 696–716 (LFLYPILIILCFVGFCIAIGL). Residues 717–749 (HSLPKLAFQWVFRTLNQAVIPIIFGGISKLKGS) lie on the Cytoplasmic side of the membrane.

It belongs to the TRAFAC class dynamin-like GTPase superfamily. GB1/RHD3 GTPase family. RHD3 subfamily.

Its subcellular location is the endoplasmic reticulum membrane. Probable GTP-binding protein that may be involved in cell development. In Paramecium tetraurelia, this protein is Protein SEY1 homolog 2.